The following is an 854-amino-acid chain: Protein asteroid (854 aa).

The interval 368–427 (SEEECSDDEHSSSSDEKFSDVEEGEDQEEADNQDEEQQEENQDVDSGDEEEEEADEGLEL) is disordered. The segment covering 375–387 (DEHSSSSDEKFSD) has biased composition (basic and acidic residues). Positions 388-427 (VEEGEDQEEADNQDEEQQEENQDVDSGDEEEEEADEGLEL) are enriched in acidic residues.

It belongs to the asteroid family. As to expression, expressed in the proliferative tissues of embryos and in the mitotically active tissue anterior to the morphogenetic furrow in eye imaginal disks.

May function in EGF receptor signaling. May play a role in compound eye morphogenesis. The chain is Protein asteroid (ast) from Drosophila melanogaster (Fruit fly).